The primary structure comprises 141 residues: Galactose-6-phosphate isomerase subunit LacA 1 (141 aa).

Belongs to the LacAB/RpiB family. Heteromultimeric protein consisting of LacA and LacB.

It catalyses the reaction aldehydo-D-galactose 6-phosphate = keto-D-tagatose 6-phosphate. The protein operates within carbohydrate metabolism; D-galactose 6-phosphate degradation; D-tagatose 6-phosphate from D-galactose 6-phosphate: step 1/1. The protein is Galactose-6-phosphate isomerase subunit LacA 1 of Streptococcus pyogenes serotype M1.